Here is a 427-residue protein sequence, read N- to C-terminus: Ribitol transporter (427 aa).

At 1 to 7 the chain is on the cytoplasmic side; it reads MSVNNKQ. The helical transmembrane segment at 8 to 28 threads the bilayer; the sequence is WYGLPLNLIWGYVAIAVFMTG. The Extracellular portion of the chain corresponds to 29 to 51; sequence DGFELAFLSHYIKALGFTPAQAS. Residues 52-72 form a helical membrane-spanning segment; sequence FAFTLYGLAAALSAWVSGVVA. Residues 73–79 lie on the Cytoplasmic side of the membrane; sequence EIITPRK. The chain crosses the membrane as a helical span at residues 80–100; sequence AMLIGFVLWCVFHVLFLVFGL. Residues 101–107 are Extracellular-facing; it reads GRANYAL. The helical transmembrane segment at 108-128 threads the bilayer; sequence ILLFYGIRGLAYPLFLYSFIV. Residues 129 to 141 are Cytoplasmic-facing; it reads AIIHNVRSDSSSS. The chain crosses the membrane as a helical span at residues 142–162; it reads ALGWFWAVYSVGIGVFGSYIP. The Extracellular portion of the chain corresponds to 163–171; that stretch reads SFTIPHIGE. Residues 172 to 192 form a helical membrane-spanning segment; that stretch reads MGTLWLALLFCATGGIIALVS. The Cytoplasmic segment spans residues 193–238; that stretch reads MRHTETPRHMQNLTTREKFAELGRAATLLYTNRSILFSSIVRIINT. A helical transmembrane segment spans residues 239–259; it reads LSLFGFAVIMPMMFVDELGFT. The Extracellular portion of the chain corresponds to 260 to 263; it reads TSEW. Residues 264-284 form a helical membrane-spanning segment; sequence LQVWAAFFFTTIFSNVFWGIV. Residues 285–295 are Cytoplasmic-facing; that stretch reads AEKMGWMKVIR. A helical transmembrane segment spans residues 296–316; it reads WFGCIGMALSSLAFYYLPQHF. Residues 317-323 lie on the Extracellular side of the membrane; sequence GHNFAMA. The helical transmembrane segment at 324–344 threads the bilayer; it reads LVPAIALGIFVAAFVPMAAVF. At 345–360 the chain is on the cytoplasmic side; that stretch reads PALEPNHKGAAISVYN. Residues 361–381 form a helical membrane-spanning segment; it reads LSAGLSNFLAPAIAVVLLPYF. Over 382–383 the chain is Extracellular; it reads ST. A helical membrane pass occupies residues 384 to 404; it reads IGVVIAYTALYILAFFLCPLI. The Cytoplasmic segment spans residues 405–427; it reads RVEQPGFTSDQHAKPFTANAAES.

This sequence belongs to the major facilitator superfamily. Sugar transporter (TC 2.A.1.1) family. CsbX subfamily.

The protein resides in the cell membrane. In Klebsiella pneumoniae, this protein is Ribitol transporter (rbtT).